The chain runs to 380 residues: Cytochrome b (380 aa).

The next 4 membrane-spanning stretches (helical) occupy residues 33–53 (FGSL…FLAM), 77–98 (WLIR…YLHI), 113–133 (WNVG…GYVL), and 178–198 (FFAF…IHLL). The heme b site is built by histidine 83 and histidine 97. Positions 182 and 196 each coordinate heme b. An a ubiquinone-binding site is contributed by histidine 201. 4 consecutive transmembrane segments (helical) span residues 226 to 246 (YKDL…ALFS), 288 to 308 (LGGV…PILH), 320 to 340 (ITQF…WIGG), and 347 to 367 (FIII…VLTP).

It belongs to the cytochrome b family. The cytochrome bc1 complex contains 3 respiratory subunits (MT-CYB, CYC1 and UQCRFS1), 2 core proteins (UQCRC1 and UQCRC2) and probably 6 low-molecular weight proteins. It depends on heme b as a cofactor.

It localises to the mitochondrion inner membrane. In terms of biological role, component of the ubiquinol-cytochrome c reductase complex (complex III or cytochrome b-c1 complex) that is part of the mitochondrial respiratory chain. The b-c1 complex mediates electron transfer from ubiquinol to cytochrome c. Contributes to the generation of a proton gradient across the mitochondrial membrane that is then used for ATP synthesis. In Dactyloptena peterseni (Starry flying gurnard), this protein is Cytochrome b (mt-cyb).